A 977-amino-acid chain; its full sequence is uncharacterized protein (977 aa).

Polar residues predominate over residues 1–24 (MMQQRSGSLSLLSNAVQAGQSSDP). The segment at 1-65 (MMQQRSGSLS…HEKTKAGKDR (65 aa)) is disordered. Positions 72–99 (CQSCRKKKVKCSGERPSCDQCLKHNIPC) form a DNA-binding region, zn(2)-C6 fungal-type. The interval 176 to 195 (LSHPTIVPSSNSSSLLNSTN) is disordered. Low complexity predominate over residues 177–195 (SHPTIVPSSNSSSLLNSTN). Ser220 carries the post-translational modification Phosphoserine. 3 disordered regions span residues 287–307 (TDSL…DSNR), 357–380 (NSAS…NNSL), and 751–774 (HTPI…ANGA). Over residues 364–379 (STSYTNNNDTTSDNNS) the composition is skewed to low complexity. A compositionally biased stretch (polar residues) spans 751 to 770 (HTPINVTNGESQNNSNNDPS).

It is found in the cytoplasm. The protein localises to the nucleus. This is an uncharacterized protein from Schizosaccharomyces pombe (strain 972 / ATCC 24843) (Fission yeast).